The primary structure comprises 330 residues: Aspartate--ammonia ligase (330 aa).

It belongs to the class-II aminoacyl-tRNA synthetase family. AsnA subfamily.

It is found in the cytoplasm. It catalyses the reaction L-aspartate + NH4(+) + ATP = L-asparagine + AMP + diphosphate + H(+). It functions in the pathway amino-acid biosynthesis; L-asparagine biosynthesis; L-asparagine from L-aspartate (ammonia route): step 1/1. The chain is Aspartate--ammonia ligase from Shigella flexneri serotype 5b (strain 8401).